Reading from the N-terminus, the 378-residue chain is Tyrosinase-like protein phomQ1' (378 aa).

The helical transmembrane segment at 42–62 (TIIVVSVITFAAIIGCWVFLS) threads the bilayer. His130 and His139 together coordinate Cu cation. N-linked (GlcNAc...) asparagine glycosylation is present at Asn209. His279 and His305 together coordinate Cu cation.

It belongs to the tyrosinase family. Cu(2+) is required as a cofactor.

It localises to the membrane. It participates in mycotoxin biosynthesis. Tyrosinase-like protein; part of the gene cluster that mediates the biosynthesis of the phomopsins, a group of hexapeptide mycotoxins which infects lupins and causes lupinosis disease in livestock. The pathway starts with the processing of the precursor phomA' by several endopeptidases including kexin proteases as well as the cluster-specific S41 family peptidase phomP1 and the oligopeptidase phomG' to produce 10 identical copies of the hexapeptide Tyr-Val-Ile-Pro-Ile-Asp. After being excised from the precursor peptide, the core peptides are cyclized and modified post-translationally by enzymes encoded within the gene cluster. The timing and order of proteolysis of the phomA' precursor and PTMs are still unknown. Two tyrosinase-like enzymes, phomQ1' and phomQ2, catalyze the chlorination and hydroxylation of Tyr, respectively. PhomYb, is proposed to be involved in the construction of the macrocyclic structure. The other 4 ustYa family proteins may be involved in PTMs that generate the unique structure of phomopsin A. PhomYa' is required for the hydroxylation of C-beta of Tyr. PhomYc', phomYd', and phomYe are responsible for the biosynthesis of 2,3-dehydroisoleucine (dIle), 2,3-dehydroaspartic acid (dAsp), and 3,4-dehydroproline (dPro), respectively. While dIle formation by phomYc' is indispensable for the installation of dAsp by phomYd', the order of the other PTMs have not been elucidated yet. Most of the biosynthetic enzymes likely have broad substrate specificity, and thus, there might be a metabolic grid from a precursor to phomopsin A. The enzyme(s) responsible for the biosynthesis of 3,4-dehydrovaline (dVal) have also not been identified yet. Finally, phomM' acts as an S-adenosylmethionine-dependent alpha-N-methyltransferase that catalyzes two successive N-methylation reactions, converting N-desmethyl-phomopsin A to phomopsin A and phomopsin A further to an N,N-dimethylated congener called phomopsin E. The sequence is that of Tyrosinase-like protein phomQ1' from Diaporthe leptostromiformis (Lupinosis disease fungus).